The following is a 489-amino-acid chain: Cytochrome P450 monooxygenase prhB (489 aa).

The next 3 helical transmembrane spans lie at 1 to 21, 212 to 232, and 287 to 307; these read MFSF…KVIY, VIFQ…MIFA, and LFIG…AYLL. N-linked (GlcNAc...) asparagine glycosylation is found at asparagine 347 and asparagine 379. Heme is bound at residue cysteine 431.

It belongs to the cytochrome P450 family. Heme is required as a cofactor.

It is found in the membrane. It participates in secondary metabolite biosynthesis; terpenoid biosynthesis. Cytochrome P450 monooxygenase; part of the gene cluster that mediates the biosynthesis of paraherquonin, a meroterpenoid with a unique, highly congested hexacyclic molecular architecture. The first step of the pathway is the synthesis of 3,5-dimethylorsellinic acid (DMOA) by the polyketide synthase prhL. Synthesis of DMOA is followed by farnesylation by the prenyltransferase prhE, methylesterification by the methyl-transferase prhM, epoxidation of the prenyl chain by the flavin-dependent monooxygenase prhF, and cyclization of the farnesyl moiety by the terpene cyclase prhH, to yield the tetracyclic intermediate, protoaustinoid A. The short chain dehydrogenase prhI then oxidizes the C-3 alcohol group of the terpene cyclase product to transform protoaustinoid A into protoaustinoid B. The FAD-binding monooxygenase prhJ catalyzes the oxidation of protoaustinoid B into preaustinoid A which is further oxidized into preaustinoid A1 by FAD-binding monooxygenase phrK. Finally, prhA leads to berkeleydione via the berkeleyone B intermediate. PrhA is a multifunctional dioxygenase that first desaturates at C5-C6 to form berkeleyone B, followed by rearrangement of the A/B-ring to form the cycloheptadiene moiety in berkeleydione. Berkeleydione serves as the key intermediate for the biosynthesis of paraherquonin as well as many other meroterpenoids. The cytochrome P450 monooxygenases prhB, prhD, and prhN, as well as the isomerase prhC, are probably involved in the late stage of paraherquonin biosynthesis, after the production of berkeleydione. Especially prhC might be a multifunctional enzyme that catalyzes the D-ring expansion via intramolecular methoxy rearrangement, as well as the hydrolysis of the expanded D-ring. The sequence is that of Cytochrome P450 monooxygenase prhB from Penicillium brasilianum.